We begin with the raw amino-acid sequence, 348 residues long: MO25-like protein At2g03410 (348 aa).

It belongs to the Mo25 family.

This Arabidopsis thaliana (Mouse-ear cress) protein is MO25-like protein At2g03410.